The sequence spans 805 residues: Cell division cycle 5-related protein (805 aa).

HTH myb-type domains are found at residues 1–58 (MPRI…DPSI) and 59–108 (KKTE…DQAQ). 2 consecutive DNA-binding regions (H-T-H motif) follow at residues 31-54 (WSRIASLLHRKSAKQCKARWYEWL) and 82-104 (WRTIAPLIGRTAAQCLERYEYLL). The span at 108-127 (QAKEGDKDEGDDPRKLRPGE) shows a compositional bias: basic and acidic residues. Disordered regions lie at residues 108-143 (QAKEGDKDEGDDPRKLRPGEIDPNPETKPARPDPID), 246-293 (HLEG…HVKK), 409-442 (LSTPYRTPGEGSGSTPRQGMTPRGAIGTPSQRSV), and 530-556 (LERRRRSQAVQRELPRPSNVNTSVLRP). Residues 142–193 (IDMDEDELEMLSEARARLANTQGKKAKRKAREKQLEEARRLAALQKRRELRA) adopt a coiled-coil conformation. Positions 246–274 (HLEGKMRDEIEQQERKKDKERMKKKKESD) are enriched in basic and acidic residues. 2 coiled-coil regions span residues 511–542 (EDAADIDERALALRAKQEELERRRRSQAVQRE) and 678–804 (YTRA…SKLQ).

This sequence belongs to the CEF1 family. Component of the precatalytic, catalytic and postcatalytic spliceosome complexes.

Its subcellular location is the nucleus. It is found in the cytoplasm. Its function is as follows. DNA-binding protein involved in cell cycle control. May act as a transcription activator. Plays a role in pre-mRNA splicing as core component of precatalytic, catalytic and postcatalytic spliceosomal complexes. May also play a role in the response to DNA damage (DDR). This is Cell division cycle 5-related protein (cdc5l) from Nematostella vectensis (Starlet sea anemone).